The following is a 146-amino-acid chain: Snake venom vascular endothelial growth factor toxin (146 aa).

The signal sequence occupies residues 1-24 (MAAYLLAVAILFCIQGWPLGTVQG). Gln25 carries the post-translational modification Pyrrolidone carboxylic acid. Intrachain disulfides connect Cys38/Cys80, Cys69/Cys115, and Cys73/Cys117. The tract at residues 118-146 (RPRSASGVNSRKHKRNPEEGEQRAKFPFV) is disordered. A compositionally biased stretch (basic and acidic residues) spans 133-146 (NPEEGEQRAKFPFV).

It belongs to the PDGF/VEGF growth factor family. Snake venom VEGF subfamily. In terms of assembly, homodimer; disulfide-linked. Interacts with VEGF receptor-1 (FLT1) with a high affinity, whereas it binds to VEGF receptor-2 (KDR) with a low affinity. Does not bind VEGF receptor-3 (FLT4). Expressed by the venom gland.

It localises to the secreted. In terms of biological role, snake venom VEGFs that may contribute to venom dispersion and prey subjugation by inducing vascular permeability and hypotension. This protein induces an increase in capillary permeability after intradermal injection, as well as a drastic hypotensive effect after intravenous injection. The hypotension is mediated by nitric oxide (NO), which is produced by VEGF-activated endothelium NO synthase. Also induces angiogenesis in vitro. Like other crotalid VEGFs, this protein interacts with VEGF receptor-1 (FLT1) with a high affinity, whereas it binds to VEGF receptor-2 (KDR) with a low affinity. The protein is Snake venom vascular endothelial growth factor toxin of Bothrops erythromelas (Caatinga lance head).